The primary structure comprises 126 residues: Large ribosomal subunit protein uL22 (126 aa).

The protein belongs to the universal ribosomal protein uL22 family. As to quaternary structure, part of the 50S ribosomal subunit.

This protein binds specifically to 23S rRNA; its binding is stimulated by other ribosomal proteins, e.g. L4, L17, and L20. It is important during the early stages of 50S assembly. It makes multiple contacts with different domains of the 23S rRNA in the assembled 50S subunit and ribosome. Its function is as follows. The globular domain of the protein is located near the polypeptide exit tunnel on the outside of the subunit, while an extended beta-hairpin is found that lines the wall of the exit tunnel in the center of the 70S ribosome. The chain is Large ribosomal subunit protein uL22 from Prochlorococcus marinus (strain NATL2A).